A 786-amino-acid chain; its full sequence is Probable glutamine--tRNA ligase (786 aa).

Basic and acidic residues predominate over residues 181 to 198 (DLAPKKKEKKPEGPKPSK). The disordered stretch occupies residues 181-218 (DLAPKKKEKKPEGPKPSKDAAAAATAPGTKNQKEASPE). The short motif at 276–286 (PEPNGVLHIGH) is the 'HIGH' region element. ATP-binding positions include 277-279 (EPN) and 283-289 (HIGHAKA). L-glutamine contacts are provided by aspartate 309 and tyrosine 444. ATP is bound by residues threonine 463, 492-493 (RL), and 500-502 (VSK). The 'KMSKS' region motif lies at 499–503 (VVSKR).

Belongs to the class-I aminoacyl-tRNA synthetase family.

The enzyme catalyses tRNA(Gln) + L-glutamine + ATP = L-glutaminyl-tRNA(Gln) + AMP + diphosphate. This Caenorhabditis elegans protein is Probable glutamine--tRNA ligase.